A 186-amino-acid polypeptide reads, in one-letter code: Adenine phosphoribosyltransferase (186 aa).

This sequence belongs to the purine/pyrimidine phosphoribosyltransferase family. Homodimer.

It is found in the cytoplasm. The catalysed reaction is AMP + diphosphate = 5-phospho-alpha-D-ribose 1-diphosphate + adenine. It participates in purine metabolism; AMP biosynthesis via salvage pathway; AMP from adenine: step 1/1. Catalyzes a salvage reaction resulting in the formation of AMP, that is energically less costly than de novo synthesis. This is Adenine phosphoribosyltransferase from Xanthomonas axonopodis pv. citri (strain 306).